Here is a 305-residue protein sequence, read N- to C-terminus: Glutaminase (305 aa).

The substrate site is built by S61, N113, E158, N165, Y189, Y241, and V259.

It belongs to the glutaminase family. As to quaternary structure, homotetramer.

The enzyme catalyses L-glutamine + H2O = L-glutamate + NH4(+). The sequence is that of Glutaminase from Clostridium botulinum (strain Kyoto / Type A2).